Consider the following 265-residue polypeptide: Undecaprenyl-diphosphatase 1 (265 aa).

7 consecutive transmembrane segments (helical) span residues 4–24 (IITAFILGIVEGLAEFLPISS), 42–62 (AKTFEIVIQLGAILAIAILYH), 84–104 (FHVFLGVFPAVVAGLLLHDII), 108–128 (LFQPYTVVIGLVAGAILMIFA), 184–204 (SEFSFLIALPVMVGATGLDLL), 217–237 (MFAVGFITSFIVAMLAVVTFL), and 245–265 (LKPFAYYRILLAILFTVFVLL).

This sequence belongs to the UppP family.

The protein localises to the cell membrane. The enzyme catalyses di-trans,octa-cis-undecaprenyl diphosphate + H2O = di-trans,octa-cis-undecaprenyl phosphate + phosphate + H(+). Its function is as follows. Catalyzes the dephosphorylation of undecaprenyl diphosphate (UPP). Confers resistance to bacitracin. In Bacillus thuringiensis subsp. konkukian (strain 97-27), this protein is Undecaprenyl-diphosphatase 1.